Consider the following 340-residue polypeptide: Fructose-1,6-bisphosphatase, cytosolic (340 aa).

The Mg(2+) site is built by Glu71, Glu100, Asp121, Leu123, and Asp124. Residues 124–127 (DGSS), Asn215, Tyr247, Tyr267, and Lys277 each bind substrate. Glu283 serves as a coordination point for Mg(2+).

Belongs to the FBPase class 1 family. The cofactor is Mg(2+).

It localises to the cytoplasm. It carries out the reaction beta-D-fructose 1,6-bisphosphate + H2O = beta-D-fructose 6-phosphate + phosphate. The polypeptide is Fructose-1,6-bisphosphatase, cytosolic (Solanum tuberosum (Potato)).